Consider the following 936-residue polypeptide: MISNKRKEIDTIDGHHEKDNDDDDSDGIDNGLLTYKKFKKDFDSGSTNYRELQIIAKSLGLASNGKKQLVYNRIEGYFLSKKVKNNLTNNETNQQEEKKEEEQQQPQPQEKQYILTFKDVEPVENYFWKVFRNIVIFKHIFSNFKNKQYGYYDLIGCDRSYLNDTSNSMEIIIDNIKSNNNHQIIRNKINIANIIHKFKKNDEKTKSFYNLLFSRYSSTSTSSTIQFDENIDKWIQAMIGHVNFTALDQFIKFFKIDSEVIKKVMKIHIDPSVFGNTTYDKLKIYNYLKSINSLPTSHTLLPFISTDLSKFLSFDNKFKKLIKSYKRLIESTNLQERMEQQKQKEKIKIHPSNIKYYEKLNQIILELNEIQTSQFTNDQLNSTIKNLLNHTTPTSTSTSTPNLTITSTASNNINLKEIIKKYYKSICLFFYCTVNSATEMFFRKPLLYYLNFKKESVDKMYERVVNKWNGRSFDHQLFFQSILKDINIEKNEKFELISNVLDNKYVKTFKEYDHYIFFKAVFSSNDIELIDYFLKILMQQPNKIQKITRYPNIGKLIGNYCNLIDKKEILDFYFQNYRDESLLFDDQNEIWKQIQLELIEHYEYLMDSIGKRCKLDFTPWFDQNFLDRLNRAILKPSVYSIGFDGYFDIVFEGLVDLNIKDNKENSIINFLSNAQLKHPLDLKFFESSFNPYKGKMLTFIKFLFNNISKESIETKLKVINLKTDNKNFEEIKSKIELTTTLTATTTTTTANLLSPKKSKDVGCLTIGKTESFNFTISIRMLLVCLYNLDRVDDIIYLFDKLPEVLFNPDYFSIFTNEYCIYGISSSYYLELFINYFIENLNNNTINYLYNCLCIASKKGYTQIFKNIISSDQNSKYLLKIQTKSNQSSLFDSKLLNDIVVKSINSSNFELSNLLIDFIDFSAKDKNSLKMKILKSK.

Over residues 1–19 (MISNKRKEIDTIDGHHEKD) the composition is skewed to basic and acidic residues. A disordered region spans residues 1 to 30 (MISNKRKEIDTIDGHHEKDNDDDDSDGIDN). Residues 44-78 (SGSTNYRELQIIAKSLGLASNGKKQLVYNRIEGYF) form the SAP domain. The tract at residues 91 to 110 (ETNQQEEKKEEEQQQPQPQE) is disordered.

This sequence belongs to the UPF0746 family.

This chain is UPF0746 protein DDB_G0280787, found in Dictyostelium discoideum (Social amoeba).